We begin with the raw amino-acid sequence, 214 residues long: Probable nicotinate-nucleotide adenylyltransferase (214 aa).

This sequence belongs to the NadD family.

It carries out the reaction nicotinate beta-D-ribonucleotide + ATP + H(+) = deamido-NAD(+) + diphosphate. The protein operates within cofactor biosynthesis; NAD(+) biosynthesis; deamido-NAD(+) from nicotinate D-ribonucleotide: step 1/1. Functionally, catalyzes the reversible adenylation of nicotinate mononucleotide (NaMN) to nicotinic acid adenine dinucleotide (NaAD). The sequence is that of Probable nicotinate-nucleotide adenylyltransferase from Thermomicrobium roseum (strain ATCC 27502 / DSM 5159 / P-2).